Here is a 244-residue protein sequence, read N- to C-terminus: Probable H/ACA ribonucleoprotein complex subunit 1-like protein (244 aa).

Disordered regions lie at residues 1 to 53 and 145 to 244; these read MSFR…GGYD and FLPQ…TKFE. RGG-box regions lie at residues 4–51 and 153–222; these read RGGR…GRGG and RGRG…RGRG. Residues 160–173 are compositionally biased toward basic and acidic residues; that stretch reads RGGDRGGRGSDRGG. Composition is skewed to gly residues over residues 174–201 and 208–217; these read RGGF…GGFR and FRGGRGGDFG. A compositionally biased stretch (basic and acidic residues) spans 218-228; that stretch reads GRGRGDFKRSY.

This sequence belongs to the GAR1 family. Component of the small nucleolar ribonucleoprotein particle containing H/ACA-type snoRNAs (H/ACA snoRNPs).

The protein resides in the nucleus. The protein localises to the nucleolus. Required for ribosome biogenesis. Part of a complex which catalyzes pseudouridylation of rRNA. This involves the isomerization of uridine such that the ribose is subsequently attached to C5, instead of the normal N1. Pseudouridine ('psi') residues may serve to stabilize the conformation of rRNAs. Involved in phase separation into sub-nucleolar condensates. Essential for normal development and also plays a role in fertility. This Caenorhabditis elegans protein is Probable H/ACA ribonucleoprotein complex subunit 1-like protein.